Here is a 1126-residue protein sequence, read N- to C-terminus: Protein translocase subunit SecA (1126 aa).

Residues Gln175, 193–197 (GEGKT), and Asp694 each bind ATP. The interval 1060 to 1126 (VQEAAPEKHE…KYKNCHGQGL (67 aa)) is disordered. Basic and acidic residues predominate over residues 1064 to 1080 (APEKHEDMSRYRTEKTD). Positions 1110, 1112, 1121, and 1122 each coordinate Zn(2+).

This sequence belongs to the SecA family. Monomer and homodimer. Part of the essential Sec protein translocation apparatus which comprises SecA, SecYEG and auxiliary proteins SecDF. Other proteins may also be involved. The cofactor is Zn(2+).

Its subcellular location is the cell inner membrane. It is found in the cytoplasm. The enzyme catalyses ATP + H2O + cellular proteinSide 1 = ADP + phosphate + cellular proteinSide 2.. In terms of biological role, part of the Sec protein translocase complex. Interacts with the SecYEG preprotein conducting channel. Has a central role in coupling the hydrolysis of ATP to the transfer of proteins into and across the cell membrane, serving as an ATP-driven molecular motor driving the stepwise translocation of polypeptide chains across the membrane. This is Protein translocase subunit SecA from Parabacteroides distasonis (strain ATCC 8503 / DSM 20701 / CIP 104284 / JCM 5825 / NCTC 11152).